A 312-amino-acid chain; its full sequence is Polyamine aminopropyltransferase (312 aa).

One can recognise a PABS domain in the interval 7–247 (FFWVQEYFTP…GPLGFALAAQ (241 aa)). Q36 serves as a coordination point for S-methyl-5'-thioadenosine. H67 and E95 together coordinate spermidine. S-methyl-5'-thioadenosine-binding positions include D115 and 147–148 (DA). D165 functions as the Proton acceptor in the catalytic mechanism. P174 provides a ligand contact to S-methyl-5'-thioadenosine.

It belongs to the spermidine/spermine synthase family. Homodimer or homotetramer.

The protein localises to the cytoplasm. It catalyses the reaction S-adenosyl 3-(methylsulfanyl)propylamine + putrescine = S-methyl-5'-thioadenosine + spermidine + H(+). It functions in the pathway amine and polyamine biosynthesis; spermidine biosynthesis; spermidine from putrescine: step 1/1. In terms of biological role, catalyzes the irreversible transfer of a propylamine group from the amino donor S-adenosylmethioninamine (decarboxy-AdoMet) to putrescine (1,4-diaminobutane) to yield spermidine. This is Polyamine aminopropyltransferase from Synechococcus sp. (strain JA-2-3B'a(2-13)) (Cyanobacteria bacterium Yellowstone B-Prime).